The chain runs to 202 residues: MSRYRGPRMKMIRRPGTLPGLTSKTPGTKVGSSDRSTSSKKISQYRIRLEEKQKLRLHYGLTERQLLKYVFTARGAKGSTGQLLLQLLEMRLDNTIFRLGIVPTIPAARQLVNHRHVSINEHIIDIPSYNCKPGDVITINNREKCRLVDRRDMNSLQKPEIPNHLTFDSKEFLGSVQQIIDRDWIDLKINELLVVEYYSRRV.

Positions 1-13 (MSRYRGPRMKMIR) are enriched in basic residues. Residues 1 to 41 (MSRYRGPRMKMIRRPGTLPGLTSKTPGTKVGSSDRSTSSKK) are disordered. Over residues 29–41 (KVGSSDRSTSSKK) the composition is skewed to low complexity. An S4 RNA-binding domain is found at 90-153 (MRLDNTIFRL…KCRLVDRRDM (64 aa)).

Belongs to the universal ribosomal protein uS4 family. Part of the 30S ribosomal subunit. Contacts protein S5. The interaction surface between S4 and S5 is involved in control of translational fidelity.

The protein resides in the plastid. In terms of biological role, one of the primary rRNA binding proteins, it binds directly to 16S rRNA where it nucleates assembly of the body of the 30S subunit. Its function is as follows. With S5 and S12 plays an important role in translational accuracy. The chain is Small ribosomal subunit protein uS4c (rps4) from Aneura mirabilis (Parasitic liverwort).